The primary structure comprises 392 residues: Cell division protein DivIB (392 aa).

Positions 1–88 are disordered; it reads MSEKDNNLTP…TQSSEAPIEN (88 aa). Residues 1–131 lie on the Cytoplasmic side of the membrane; the sequence is MSEKDNNLTP…KGSAPLLKKM (131 aa). Over residues 14-32 the composition is skewed to basic and acidic residues; sequence KHLEYQKRKAEEAKKEKKA. The segment covering 58 to 76 has biased composition (acidic residues); sequence TRDEAESAELLEEGFETNN. Residues 132–152 form a helical membrane-spanning segment; the sequence is WPALAVVVLVFVGSLYLISPL. The 72-residue stretch at 153 to 224 folds into the POTRA domain; sequence SKISTFSVSG…NRFEAIVKEH (72 aa). At 153 to 392 the chain is on the extracellular side; that stretch reads SKISTFSVSG…TAQSTTTSSN (240 aa). Residues 368–392 form a disordered region; sequence ISAQNAKKTDASSENTAQSTTTSSN.

This sequence belongs to the FtsQ/DivIB family. DivIB subfamily.

The protein resides in the cell membrane. Cell division protein that may be involved in stabilizing or promoting the assembly of the division complex. This is Cell division protein DivIB from Lactococcus lactis subsp. lactis (strain KF147).